A 274-amino-acid polypeptide reads, in one-letter code: Large ribosomal subunit protein uL2 (274 aa).

The interval 220–265 (VRGAAMNPRDHPHGGGEGRAPRGMSTPKTKWGKPARGVKTRHNPRF) is disordered. Positions 227–239 (PRDHPHGGGEGRA) are enriched in basic and acidic residues. Basic residues predominate over residues 249 to 262 (KWGKPARGVKTRHN).

The protein belongs to the universal ribosomal protein uL2 family. In terms of assembly, part of the 50S ribosomal subunit. Forms a bridge to the 30S subunit in the 70S ribosome.

Functionally, one of the primary rRNA binding proteins. Required for association of the 30S and 50S subunits to form the 70S ribosome, for tRNA binding and peptide bond formation. It has been suggested to have peptidyltransferase activity; this is somewhat controversial. Makes several contacts with the 16S rRNA in the 70S ribosome. This Chloroflexus aurantiacus (strain ATCC 29364 / DSM 637 / Y-400-fl) protein is Large ribosomal subunit protein uL2.